The primary structure comprises 95 residues: Large ribosomal subunit protein bL27 (95 aa).

A propeptide spanning residues 1-6 (MKLQLF) is cleaved from the precursor. A disordered region spans residues 1 to 25 (MKLQLFAHKKGVGSSRNGRDSESKR).

Belongs to the bacterial ribosomal protein bL27 family. The N-terminus is cleaved by ribosomal processing cysteine protease Prp.

The sequence is that of Large ribosomal subunit protein bL27 from Thermoanaerobacter pseudethanolicus (strain ATCC 33223 / 39E) (Clostridium thermohydrosulfuricum).